Reading from the N-terminus, the 165-residue chain is Nucleotide-binding protein PMT9312_0481 (165 aa).

Belongs to the YajQ family.

Functionally, nucleotide-binding protein. This Prochlorococcus marinus (strain MIT 9312) protein is Nucleotide-binding protein PMT9312_0481.